Reading from the N-terminus, the 124-residue chain is Small ribosomal subunit protein uS10z/uS10x (124 aa).

This sequence belongs to the universal ribosomal protein uS10 family.

The chain is Small ribosomal subunit protein uS10z/uS10x (RPS20A) from Arabidopsis thaliana (Mouse-ear cress).